Consider the following 388-residue polypeptide: Deoxyuridine 5'-triphosphate nucleotidohydrolase (388 aa).

The span at E77 to E88 shows a compositional bias: basic and acidic residues. Disordered stretches follow at residues E77–P96 and T336–P388. The span at V351 to K363 shows a compositional bias: acidic residues.

Belongs to the dUTPase family. It depends on Mg(2+) as a cofactor.

The enzyme catalyses dUTP + H2O = dUMP + diphosphate + H(+). It functions in the pathway pyrimidine metabolism; dUMP biosynthesis; dUMP from dCTP (dUTP route): step 2/2. In terms of biological role, involved in nucleotide metabolism: produces dUMP, the immediate precursor of thymidine nucleotides and decreases the intracellular concentration of dUTP to avoid uracil incorporation into viral DNA. The protein is Deoxyuridine 5'-triphosphate nucleotidohydrolase of Homo sapiens (Human).